The following is a 335-amino-acid chain: Probable cytosolic iron-sulfur protein assembly protein Ciao1 (335 aa).

WD repeat units follow at residues 12-51, 57-96, 101-140, 146-185, 192-231, 250-289, and 301-335; these read GHKGRIWGVAWHPKGNVFASCGEDKAIRIWSLTGSTWSTK, GHKRTIREIRWSPCGQYLASASFDATTAIWSKSSGEFECN, GHENEVKSVSWSRSGGLLATCSRDKSVWIWEVAGDDEFEC, SHTQDVKRVVWHPTKEVLASASYDNTIKMYAEDPVDNDWD, SHTSTIWGIDFDADGERLVSCSDDTTIKIWKAYHPGNSAG, QHSRAIYDVSWCKLTGLIATACGDDGIRIFKETSDSKPDE, and AHDQDVNSVQWNPVVAGQLISCSDDGTIKIWKVTE.

It belongs to the WD repeat CIA1 family.

Essential component of the cytosolic iron-sulfur (Fe/S) protein assembly machinery. Required for the maturation of extramitochondrial Fe/S proteins. In Drosophila erecta (Fruit fly), this protein is Probable cytosolic iron-sulfur protein assembly protein Ciao1.